A 627-amino-acid chain; its full sequence is Sister chromatid cohesion 1 protein 1 (627 aa).

3 disordered regions span residues 211 to 294, 395 to 416, and 461 to 510; these read GDDE…TATS, MHNH…NLDS, and GDDV…VAEE. Basic and acidic residues-rich tracts occupy residues 254–263, 272–282, and 395–408; these read EQQENRRDGF, IPDKEEHDRPQ, and MHNH…ERSD. Polar residues predominate over residues 467–487; the sequence is MPSTPSARGAASINNIEISSK.

Belongs to the rad21 family. Component of the cohesin complex. In terms of tissue distribution, isoform 2 is expressed at low levels in buds, leaves and roots, whereas expression of isoform 1 is confined to buds.

The protein resides in the nucleus. In terms of biological role, involved in chromosome condensation, pairing and segregation during meiosis. Responsible for cohesion between replicated sister chromatids. This is Sister chromatid cohesion 1 protein 1 (SYN1) from Arabidopsis thaliana (Mouse-ear cress).